A 344-amino-acid chain; its full sequence is L-threonine 3-dehydrogenase (344 aa).

Cysteine 42 lines the Zn(2+) pocket. Active-site charge relay system residues include threonine 44 and histidine 47. Histidine 67, glutamate 68, cysteine 97, cysteine 100, cysteine 103, and cysteine 111 together coordinate Zn(2+). Residues isoleucine 179, aspartate 199, arginine 204, leucine 266–isoleucine 268, and isoleucine 290–tyrosine 291 contribute to the NAD(+) site.

Belongs to the zinc-containing alcohol dehydrogenase family. As to quaternary structure, homotetramer. Zn(2+) serves as cofactor.

It is found in the cytoplasm. The catalysed reaction is L-threonine + NAD(+) = (2S)-2-amino-3-oxobutanoate + NADH + H(+). The protein operates within amino-acid degradation; L-threonine degradation via oxydo-reductase pathway; glycine from L-threonine: step 1/2. In terms of biological role, catalyzes the NAD(+)-dependent oxidation of L-threonine to 2-amino-3-ketobutyrate. The protein is L-threonine 3-dehydrogenase of Chelativorans sp. (strain BNC1).